We begin with the raw amino-acid sequence, 304 residues long: MPELALLEEVVDKVRPLLGQGKVADYIPALASVDAGKLGIAVTTVDGETLGAGDYLEPFSIQSISKVFSLTLALTLYEEAEIWSRVGKEPSGHSFNSLVQVELERGKPRNPFINAGALVIADLLQSRLGAPKHRMLELVRQLSQNDKVCFDKQVADSEYQHSARNAAIAYLMKSFGNFQGDVDTVLRTYFHYCALKMNCADLSKAMLYLANRGKSITGTELISQVQTRQLNALLATSGLYDGAGEFAYRVGMPGKSGVGGGIIAVIPGELSICVWSPELDGNGNSLAGTAMLEHLSQRLGRSIF.

Residues S63, N114, E158, N165, Y189, Y240, and V258 each contribute to the substrate site.

This sequence belongs to the glutaminase family. As to quaternary structure, homotetramer.

The enzyme catalyses L-glutamine + H2O = L-glutamate + NH4(+). This chain is Glutaminase, found in Shewanella baltica (strain OS223).